The chain runs to 136 residues: MVRVARSVNARKKRRSILAAAKGYRGQRSRLYRKAKEQVLRSLVYAYRDRRKRKSNFRKLWIIRINAAARMEGVTYNRFLQGLKLANIELDRRSLAHLAVHNPDTFSALVGVAKDSLKNAPDPVAAARLRGTSSRT.

It belongs to the bacterial ribosomal protein bL20 family.

Binds directly to 23S ribosomal RNA and is necessary for the in vitro assembly process of the 50S ribosomal subunit. It is not involved in the protein synthesizing functions of that subunit. In Tropheryma whipplei (strain Twist) (Whipple's bacillus), this protein is Large ribosomal subunit protein bL20.